Consider the following 448-residue polypeptide: N-succinylarginine dihydrolase (448 aa).

Substrate contacts are provided by residues 19 to 28, asparagine 110, and 137 to 138; these read GGLSYGNVAS and HR. Residue glutamate 174 is part of the active site. Arginine 214 serves as a coordination point for substrate. The active site involves histidine 250. Substrate-binding residues include aspartate 252 and asparagine 365. Cysteine 371 (nucleophile) is an active-site residue.

It belongs to the succinylarginine dihydrolase family. In terms of assembly, homodimer.

The catalysed reaction is N(2)-succinyl-L-arginine + 2 H2O + 2 H(+) = N(2)-succinyl-L-ornithine + 2 NH4(+) + CO2. The protein operates within amino-acid degradation; L-arginine degradation via AST pathway; L-glutamate and succinate from L-arginine: step 2/5. Functionally, catalyzes the hydrolysis of N(2)-succinylarginine into N(2)-succinylornithine, ammonia and CO(2). This is N-succinylarginine dihydrolase from Pseudomonas savastanoi pv. phaseolicola (strain 1448A / Race 6) (Pseudomonas syringae pv. phaseolicola (strain 1448A / Race 6)).